Here is a 637-residue protein sequence, read N- to C-terminus: 1-deoxy-D-xylulose-5-phosphate synthase (637 aa).

Thiamine diphosphate is bound by residues His-82 and 123–125; that span reads GHA. Asp-154 serves as a coordination point for Mg(2+). Residues 155 to 156, Asn-183, Tyr-295, and Glu-378 each bind thiamine diphosphate; that span reads GS. Asn-183 contributes to the Mg(2+) binding site.

The protein belongs to the transketolase family. DXPS subfamily. As to quaternary structure, homodimer. Mg(2+) serves as cofactor. Thiamine diphosphate is required as a cofactor.

The enzyme catalyses D-glyceraldehyde 3-phosphate + pyruvate + H(+) = 1-deoxy-D-xylulose 5-phosphate + CO2. It functions in the pathway metabolic intermediate biosynthesis; 1-deoxy-D-xylulose 5-phosphate biosynthesis; 1-deoxy-D-xylulose 5-phosphate from D-glyceraldehyde 3-phosphate and pyruvate: step 1/1. In terms of biological role, catalyzes the acyloin condensation reaction between C atoms 2 and 3 of pyruvate and glyceraldehyde 3-phosphate to yield 1-deoxy-D-xylulose-5-phosphate (DXP). This chain is 1-deoxy-D-xylulose-5-phosphate synthase, found in Lawsonia intracellularis (strain PHE/MN1-00).